The primary structure comprises 214 residues: Endothelial cell-specific chemotaxis regulator (214 aa).

Positions 1–18 are cleaved as a signal peptide; sequence MRLGSAILGLLLLQGYSS. At 19-130 the chain is on the extracellular side; it reads QPTTTQTSQE…PTPTSESVLT (112 aa). The interval 23-107 is disordered; the sequence is TQTSQEILQK…DATPSPETTS (85 aa). A compositionally biased stretch (polar residues) spans 28–57; sequence EILQKSSQVSLVSNQPVTPRSSTMDKQSLS. Low complexity predominate over residues 80–90; it reads RSSSSSSSSSS. Residues 131-151 form a helical membrane-spanning segment; that stretch reads VAAFGVISFIVILVVVVIILV. The Cytoplasmic segment spans residues 152-214; that stretch reads SVVSLRFKCR…KGSMSAEKIL (63 aa). Residues 163–184 form a disordered region; sequence NKESEDPQKPGSSGLSESCSTA. Positions 172 to 184 are enriched in polar residues; the sequence is PGSSGLSESCSTA. 2 positions are modified to phosphoserine: Ser-204 and Ser-207.

The protein belongs to the ECSCR family. In terms of assembly, interacts with FLNA. Interacts with the 20S proteasome subunit PSMA7. Post-translationally, may be heavily O-glycosylated. In terms of tissue distribution, expressed in all tissues examined, highest expression was observed in lung and spleen endothelial cells.

It localises to the cell membrane. It is found in the cytoplasm. Regulates endothelial chemotaxis and tube formation. Has a role in angiogenesis and apoptosis via modulation of the actin cytoskeleton and facilitation of proteasomal degradation of the apoptosis inhibitors BIRC3/IAP1 and BIRC2/IAP2. The sequence is that of Endothelial cell-specific chemotaxis regulator (Ecscr) from Mus musculus (Mouse).